Reading from the N-terminus, the 92-residue chain is MVRSVWKGPFVDGYLLGKAEKVRASGRNEVIKIWSRRSTILPQFVGLTFGVHNGNKHIPVSVSEEMVGHKFGEFAPTRTYYGHGADKKAKRK.

This sequence belongs to the universal ribosomal protein uS19 family.

Its function is as follows. Protein S19 forms a complex with S13 that binds strongly to the 16S ribosomal RNA. The polypeptide is Small ribosomal subunit protein uS19 (Bartonella henselae (strain ATCC 49882 / DSM 28221 / CCUG 30454 / Houston 1) (Rochalimaea henselae)).